A 108-amino-acid chain; its full sequence is UPF0060 membrane protein Mflv_3127 (108 aa).

Transmembrane regions (helical) follow at residues 7–27, 32–52, 61–81, and 87–107; these read LLFVLAAVLEIGGAWLVWQGF, GWLWVGAGVLALGAYGFVAAF, VLAAYGGVFVAGSLIWGMVAD, and RWDITGAAVCLLGVVLIMYAP.

Belongs to the UPF0060 family.

It is found in the cell membrane. This chain is UPF0060 membrane protein Mflv_3127, found in Mycolicibacterium gilvum (strain PYR-GCK) (Mycobacterium gilvum (strain PYR-GCK)).